The primary structure comprises 637 residues: Chaperone protein HtpG (637 aa).

Residues 1–345 (MSQQETHGFQ…SNDLPLNVSR (345 aa)) are a; substrate-binding. The segment at 346–562 (EILQDNHITK…EGEMSSQMIK (217 aa)) is b. The segment at 563-637 (LMQAAGQPVP…MNQMLLANLK (75 aa)) is c.

It belongs to the heat shock protein 90 family. Homodimer.

Its subcellular location is the cytoplasm. Molecular chaperone. Has ATPase activity. The polypeptide is Chaperone protein HtpG (Shewanella sp. (strain ANA-3)).